A 508-amino-acid chain; its full sequence is Photosystem II CP47 reaction center protein (508 aa).

The next 6 helical transmembrane spans lie at 21-36 (SVHI…WAGS), 101-115 (IVFS…IWHW), 140-156 (GIHL…FGAF), 203-218 (IAAG…FHLS), 237-252 (VLSS…AFVV), and 457-472 (SFAL…HGAR).

This sequence belongs to the PsbB/PsbC family. PsbB subfamily. In terms of assembly, PSII is composed of 1 copy each of membrane proteins PsbA, PsbB, PsbC, PsbD, PsbE, PsbF, PsbH, PsbI, PsbJ, PsbK, PsbL, PsbM, PsbT, PsbX, PsbY, PsbZ, Psb30/Ycf12, at least 3 peripheral proteins of the oxygen-evolving complex and a large number of cofactors. It forms dimeric complexes. Requires Binds multiple chlorophylls. PSII binds additional chlorophylls, carotenoids and specific lipids. as cofactor.

The protein localises to the plastid. The protein resides in the chloroplast thylakoid membrane. One of the components of the core complex of photosystem II (PSII). It binds chlorophyll and helps catalyze the primary light-induced photochemical processes of PSII. PSII is a light-driven water:plastoquinone oxidoreductase, using light energy to abstract electrons from H(2)O, generating O(2) and a proton gradient subsequently used for ATP formation. The sequence is that of Photosystem II CP47 reaction center protein from Panax ginseng (Korean ginseng).